We begin with the raw amino-acid sequence, 331 residues long: Ketol-acid reductoisomerase (NADP(+)) (331 aa).

Positions 2 to 182 (AKIYTDKDAS…GATRAGVIET (181 aa)) constitute a KARI N-terminal Rossmann domain. Residues 25–28 (YGIQ), Arg48, Ser53, and 83–86 (DMEQ) contribute to the NADP(+) site. Residue His108 is part of the active site. An NADP(+)-binding site is contributed by Gly134. A KARI C-terminal knotted domain is found at 183–328 (TFAEETETDL…AEMRKLLFGR (146 aa)). Mg(2+) is bound by residues Asp191, Glu195, Glu227, and Glu231. Ser252 is a binding site for substrate.

The protein belongs to the ketol-acid reductoisomerase family. Mg(2+) is required as a cofactor.

It carries out the reaction (2R)-2,3-dihydroxy-3-methylbutanoate + NADP(+) = (2S)-2-acetolactate + NADPH + H(+). The enzyme catalyses (2R,3R)-2,3-dihydroxy-3-methylpentanoate + NADP(+) = (S)-2-ethyl-2-hydroxy-3-oxobutanoate + NADPH + H(+). The protein operates within amino-acid biosynthesis; L-isoleucine biosynthesis; L-isoleucine from 2-oxobutanoate: step 2/4. Its pathway is amino-acid biosynthesis; L-valine biosynthesis; L-valine from pyruvate: step 2/4. Involved in the biosynthesis of branched-chain amino acids (BCAA). Catalyzes an alkyl-migration followed by a ketol-acid reduction of (S)-2-acetolactate (S2AL) to yield (R)-2,3-dihydroxy-isovalerate. In the isomerase reaction, S2AL is rearranged via a Mg-dependent methyl migration to produce 3-hydroxy-3-methyl-2-ketobutyrate (HMKB). In the reductase reaction, this 2-ketoacid undergoes a metal-dependent reduction by NADPH to yield (R)-2,3-dihydroxy-isovalerate. The polypeptide is Ketol-acid reductoisomerase (NADP(+)) (Pyrobaculum islandicum (strain DSM 4184 / JCM 9189 / GEO3)).